A 225-amino-acid polypeptide reads, in one-letter code: Phosphatidylserine decarboxylase proenzyme (225 aa).

Ser-189 (schiff-base intermediate with substrate; via pyruvic acid) is an active-site residue. A Pyruvic acid (Ser); by autocatalysis modification is found at Ser-189.

Belongs to the phosphatidylserine decarboxylase family. PSD-A subfamily. In terms of assembly, heterodimer of a large membrane-associated beta subunit and a small pyruvoyl-containing alpha subunit. It depends on pyruvate as a cofactor. Is synthesized initially as an inactive proenzyme. Formation of the active enzyme involves a self-maturation process in which the active site pyruvoyl group is generated from an internal serine residue via an autocatalytic post-translational modification. Two non-identical subunits are generated from the proenzyme in this reaction, and the pyruvate is formed at the N-terminus of the alpha chain, which is derived from the carboxyl end of the proenzyme. The post-translation cleavage follows an unusual pathway, termed non-hydrolytic serinolysis, in which the side chain hydroxyl group of the serine supplies its oxygen atom to form the C-terminus of the beta chain, while the remainder of the serine residue undergoes an oxidative deamination to produce ammonia and the pyruvoyl prosthetic group on the alpha chain.

It localises to the cell membrane. It catalyses the reaction a 1,2-diacyl-sn-glycero-3-phospho-L-serine + H(+) = a 1,2-diacyl-sn-glycero-3-phosphoethanolamine + CO2. Its pathway is phospholipid metabolism; phosphatidylethanolamine biosynthesis; phosphatidylethanolamine from CDP-diacylglycerol: step 2/2. Catalyzes the formation of phosphatidylethanolamine (PtdEtn) from phosphatidylserine (PtdSer). This Amoebophilus asiaticus (strain 5a2) protein is Phosphatidylserine decarboxylase proenzyme.